The following is a 366-amino-acid chain: Flagellar P-ring protein (366 aa).

Positions 1–23 are cleaved as a signal peptide; that stretch reads MRTLKIFALAVSLLSMLAAPVQA.

It belongs to the FlgI family. The basal body constitutes a major portion of the flagellar organelle and consists of four rings (L,P,S, and M) mounted on a central rod.

It is found in the periplasm. It localises to the bacterial flagellum basal body. Assembles around the rod to form the L-ring and probably protects the motor/basal body from shearing forces during rotation. The polypeptide is Flagellar P-ring protein (Idiomarina loihiensis (strain ATCC BAA-735 / DSM 15497 / L2-TR)).